Consider the following 673-residue polypeptide: DNA ligase (673 aa).

Residues 33 to 37 (DAEYD), 82 to 83 (SL), and glutamate 114 each bind NAD(+). Residue lysine 116 is the N6-AMP-lysine intermediate of the active site. Residues arginine 137, glutamate 174, lysine 291, and lysine 315 each coordinate NAD(+). Zn(2+)-binding residues include cysteine 409, cysteine 412, cysteine 427, and cysteine 433. The region spanning 592 to 673 (AQEQPLAGLV…LINLLEQHNG (82 aa)) is the BRCT domain.

Belongs to the NAD-dependent DNA ligase family. LigA subfamily. Mg(2+) serves as cofactor. The cofactor is Mn(2+).

It carries out the reaction NAD(+) + (deoxyribonucleotide)n-3'-hydroxyl + 5'-phospho-(deoxyribonucleotide)m = (deoxyribonucleotide)n+m + AMP + beta-nicotinamide D-nucleotide.. DNA ligase that catalyzes the formation of phosphodiester linkages between 5'-phosphoryl and 3'-hydroxyl groups in double-stranded DNA using NAD as a coenzyme and as the energy source for the reaction. It is essential for DNA replication and repair of damaged DNA. The protein is DNA ligase of Pseudoalteromonas translucida (strain TAC 125).